The primary structure comprises 406 residues: Arginine biosynthesis bifunctional protein ArgJ (406 aa).

The substrate site is built by Thr-156, Lys-182, Thr-193, Glu-279, Asn-401, and Thr-406. Residue Thr-193 is the Nucleophile of the active site.

The protein belongs to the ArgJ family. In terms of assembly, heterotetramer of two alpha and two beta chains.

It localises to the cytoplasm. It carries out the reaction N(2)-acetyl-L-ornithine + L-glutamate = N-acetyl-L-glutamate + L-ornithine. The enzyme catalyses L-glutamate + acetyl-CoA = N-acetyl-L-glutamate + CoA + H(+). It functions in the pathway amino-acid biosynthesis; L-arginine biosynthesis; L-ornithine and N-acetyl-L-glutamate from L-glutamate and N(2)-acetyl-L-ornithine (cyclic): step 1/1. Its pathway is amino-acid biosynthesis; L-arginine biosynthesis; N(2)-acetyl-L-ornithine from L-glutamate: step 1/4. Its activity is regulated as follows. Feedback inhibition by L-arginine. Its function is as follows. Catalyzes two activities which are involved in the cyclic version of arginine biosynthesis: the synthesis of N-acetylglutamate from glutamate and acetyl-CoA as the acetyl donor, and of ornithine by transacetylation between N(2)-acetylornithine and glutamate. The polypeptide is Arginine biosynthesis bifunctional protein ArgJ (Bacillus amyloliquefaciens (Bacillus velezensis)).